The chain runs to 142 residues: Small ribosomal subunit protein bS6 (142 aa).

The disordered stretch occupies residues 96–142 (VTGQSEMLKAEENRSERRERRERPEHDGSADGDDSDSDSDNSDNADE). Positions 103 to 124 (LKAEENRSERRERRERPEHDGS) are enriched in basic and acidic residues. Positions 125-142 (ADGDDSDSDSDNSDNADE) are enriched in acidic residues.

The protein belongs to the bacterial ribosomal protein bS6 family.

In terms of biological role, binds together with bS18 to 16S ribosomal RNA. In Pseudomonas fluorescens (strain Pf0-1), this protein is Small ribosomal subunit protein bS6.